The following is a 589-amino-acid chain: Probable translation initiation factor IF-2 (589 aa).

In terms of domain architecture, tr-type G spans 14 to 231 (LRQPIVCVLG…GLAQRFLESE (218 aa)). The interval 23–30 (GHVDHGKT) is G1. 23 to 30 (GHVDHGKT) is a binding site for GTP. The G2 stretch occupies residues 48–52 (GITQR). The interval 84–87 (DTPG) is G3. Residues 84–88 (DTPGH) and 138–141 (NKID) each bind GTP. Residues 138–141 (NKID) form a G4 region. The tract at residues 206–208 (SAK) is G5.

It belongs to the TRAFAC class translation factor GTPase superfamily. Classic translation factor GTPase family. IF-2 subfamily.

Functionally, function in general translation initiation by promoting the binding of the formylmethionine-tRNA to ribosomes. Seems to function along with eIF-2. This is Probable translation initiation factor IF-2 from Thermoplasma volcanium (strain ATCC 51530 / DSM 4299 / JCM 9571 / NBRC 15438 / GSS1).